The primary structure comprises 22 residues: Brevinin-1OKa (22 aa).

K22 is modified (lysine amide).

As to expression, expressed by the skin glands.

It is found in the secreted. Its function is as follows. Antimicrobial peptide. Active against Gram-negative bacterium E.coli (MIC=12.5 uM) and against Gram-positive bacterium S.aureus (MIC=12.5 uM). The polypeptide is Brevinin-1OKa (Nidirana okinavana (Kampira Falls frog)).